The chain runs to 334 residues: Beta-hexosaminidase (334 aa).

Substrate-binding positions include Asp-60, Arg-68, Arg-133, and 163–164 (KH). His-176 acts as the Proton donor/acceptor in catalysis. Catalysis depends on Asp-247, which acts as the Nucleophile.

Belongs to the glycosyl hydrolase 3 family. NagZ subfamily.

The protein resides in the cytoplasm. The enzyme catalyses Hydrolysis of terminal non-reducing N-acetyl-D-hexosamine residues in N-acetyl-beta-D-hexosaminides.. Its pathway is cell wall biogenesis; peptidoglycan recycling. Its function is as follows. Plays a role in peptidoglycan recycling by cleaving the terminal beta-1,4-linked N-acetylglucosamine (GlcNAc) from peptide-linked peptidoglycan fragments, giving rise to free GlcNAc, anhydro-N-acetylmuramic acid and anhydro-N-acetylmuramic acid-linked peptides. This is Beta-hexosaminidase from Xanthomonas axonopodis pv. citri (strain 306).